Consider the following 412-residue polypeptide: Subtilisin-like protease 6 (412 aa).

An N-terminal signal peptide occupies residues 1–20 (MGFITKAIPIVLAALSTVNG). Residues 21-126 (AKILEAGPHA…VVRTSTNGTN (106 aa)) constitute a propeptide that is removed on maturation. The Inhibitor I9 domain maps to 36–120 (KYIVVMKREV…YIEPDFVVRT (85 aa)). N-linked (GlcNAc...) asparagine glycans are attached at residues Asn-123 and Asn-126. In terms of domain architecture, Peptidase S8 spans 135–412 (SWGLARVSSK…SKLIYNGSGK (278 aa)). Residues Asp-167 and His-198 each act as charge relay system in the active site. N-linked (GlcNAc...) asparagine glycans are attached at residues Asn-252 and Asn-264. Catalysis depends on Ser-358, which acts as the Charge relay system. The N-linked (GlcNAc...) asparagine glycan is linked to Asn-408.

It belongs to the peptidase S8 family.

Its subcellular location is the secreted. Secreted subtilisin-like serine protease with keratinolytic activity that contributes to pathogenicity. This chain is Subtilisin-like protease 6 (SUB6), found in Trichophyton equinum (Horse ringworm fungus).